A 194-amino-acid polypeptide reads, in one-letter code: HTH-type transcriptional regulator BetI (194 aa).

The HTH tetR-type domain occupies 8-68; sequence EIRRAQLIDA…ATMRHVLRDL (61 aa). The H-T-H motif DNA-binding region spans 31 to 50; that stretch reads TLASVAQRANISTGIVSHYF.

It functions in the pathway amine and polyamine biosynthesis; betaine biosynthesis via choline pathway [regulation]. Functionally, repressor involved in the biosynthesis of the osmoprotectant glycine betaine. It represses transcription of the choline transporter BetT and the genes of BetAB involved in the synthesis of glycine betaine. This chain is HTH-type transcriptional regulator BetI, found in Burkholderia ambifaria (strain MC40-6).